Here is a 333-residue protein sequence, read N- to C-terminus: Low specificity L-threonine aldolase (333 aa).

N6-(pyridoxal phosphate)lysine is present on Lys-197.

It belongs to the threonine aldolase family. Homotetramer. It depends on pyridoxal 5'-phosphate as a cofactor.

It carries out the reaction L-threonine = acetaldehyde + glycine. It catalyses the reaction L-allo-threonine = acetaldehyde + glycine. In terms of biological role, catalyzes the cleavage of L-allo-threonine and L-threonine to glycine and acetaldehyde. L-threo-phenylserine and L-erythro-phenylserine are also good substrates. The sequence is that of Low specificity L-threonine aldolase (ltaE) from Escherichia coli O157:H7.